A 92-amino-acid chain; its full sequence is Large ribosomal subunit protein uL23 (92 aa).

Belongs to the universal ribosomal protein uL23 family. In terms of assembly, part of the 50S ribosomal subunit. Contacts protein L29, and trigger factor when it is bound to the ribosome.

Functionally, one of the early assembly proteins it binds 23S rRNA. One of the proteins that surrounds the polypeptide exit tunnel on the outside of the ribosome. Forms the main docking site for trigger factor binding to the ribosome. The protein is Large ribosomal subunit protein uL23 of Bdellovibrio bacteriovorus (strain ATCC 15356 / DSM 50701 / NCIMB 9529 / HD100).